The primary structure comprises 552 residues: Urocanate hydratase (552 aa).

Residues 49–50, glutamine 127, 173–175, glutamate 193, arginine 198, 239–240, 260–264, 270–271, and tyrosine 319 each bind NAD(+); these read GG, GMG, NA, QTSAH, and YV. The active site involves cysteine 407. Glycine 489 is a binding site for NAD(+).

Belongs to the urocanase family. As to quaternary structure, composed of at least two subunits. NAD(+) is required as a cofactor.

It localises to the cytoplasm. It carries out the reaction 4-imidazolone-5-propanoate = trans-urocanate + H2O. It participates in amino-acid degradation; L-histidine degradation into L-glutamate; N-formimidoyl-L-glutamate from L-histidine: step 2/3. Catalyzes the conversion of urocanate to 4-imidazolone-5-propionate. In Bacillus subtilis (strain 168), this protein is Urocanate hydratase.